The following is a 1238-amino-acid chain: Chitin synthase 4 (1238 aa).

2 disordered regions span residues 1–93 and 132–190; these read MAEP…PERN and TVSS…RRQK. The span at 14 to 34 shows a compositional bias: basic and acidic residues; sequence TRDKSHSPYRESPSRRLRDVE. The N-linked (GlcNAc...) asparagine glycan is linked to Asn50. 2 stretches are compositionally biased toward polar residues: residues 71-80 and 133-142; these read SNPNPMSQSD and VSSGSTQQDT. The segment covering 175–190 has biased composition (basic and acidic residues); that stretch reads RKDTRNLTEEEKRRQK. A glycan (N-linked (GlcNAc...) asparagine) is linked at Asn180. The next 2 membrane-spanning stretches (helical) occupy residues 200–220 and 235–255; these read IWNI…LQCF and VGLI…TFGF. Asn365, Asn404, and Asn426 each carry an N-linked (GlcNAc...) asparagine glycan. A helical transmembrane segment spans residues 487-507; the sequence is VVLYVSLVFILAIVAAKFFLA. Disordered regions lie at residues 548 to 570 and 582 to 606; these read PKIT…RGSM and YAVD…AKLL. Residues 553–562 are compositionally biased toward polar residues; that stretch reads PASTVTGSDG. Asn617, Asn903, and Asn1030 each carry an N-linked (GlcNAc...) asparagine glycan. Helical transmembrane passes span 1062–1082, 1087–1107, and 1115–1135; these read IGTL…ILSI, VPVI…ILIV, and YILW…VLPA.

Belongs to the chitin synthase family. Class IV subfamily. In terms of processing, maximal activity requires trypsin activation, suggesting a zymogenic nature.

The protein resides in the cell membrane. The enzyme catalyses [(1-&gt;4)-N-acetyl-beta-D-glucosaminyl](n) + UDP-N-acetyl-alpha-D-glucosamine = [(1-&gt;4)-N-acetyl-beta-D-glucosaminyl](n+1) + UDP + H(+). Activity is stimulated by Mg(2+), and is more inhibited by polyoxin D than by nikkomycin. Functionally, polymerizes chitin, a structural polymer of the cell wall and septum, by transferring the sugar moiety of UDP-GlcNAc to the non-reducing end of the growing chitin polymer. CHS4 synthesizes a large amount of chitin and appears to play a role in the process of cell separation. CHS4 is particularly well suited for functioning at the higher temperatures associated with its poorly characterized saprophic environment and with human infection. This Exophiala dermatitidis (Black yeast-like fungus) protein is Chitin synthase 4.